The following is a 249-amino-acid chain: Enolase-phosphatase E1 (249 aa).

2 residues coordinate Mg(2+): aspartate 15 and glutamate 17. Substrate is bound by residues serine 146–serine 147 and lysine 180. Aspartate 205 is a binding site for Mg(2+).

It belongs to the HAD-like hydrolase superfamily. MasA/MtnC family. Monomer. Mg(2+) serves as cofactor.

The protein localises to the cytoplasm. It is found in the nucleus. It carries out the reaction 5-methylsulfanyl-2,3-dioxopentyl phosphate + H2O = 1,2-dihydroxy-5-(methylsulfanyl)pent-1-en-3-one + phosphate. Its pathway is amino-acid biosynthesis; L-methionine biosynthesis via salvage pathway; L-methionine from S-methyl-5-thio-alpha-D-ribose 1-phosphate: step 3/6. The protein operates within amino-acid biosynthesis; L-methionine biosynthesis via salvage pathway; L-methionine from S-methyl-5-thio-alpha-D-ribose 1-phosphate: step 4/6. In terms of biological role, bifunctional enzyme that catalyzes the enolization of 2,3-diketo-5-methylthiopentyl-1-phosphate (DK-MTP-1-P) into the intermediate 2-hydroxy-3-keto-5-methylthiopentenyl-1-phosphate (HK-MTPenyl-1-P), which is then dephosphorylated to form the acireductone 1,2-dihydroxy-3-keto-5-methylthiopentene (DHK-MTPene). The protein is Enolase-phosphatase E1 of Caenorhabditis briggsae.